We begin with the raw amino-acid sequence, 212 residues long: Phosphatidylserine decarboxylase proenzyme (212 aa).

Catalysis depends on Ser182, which acts as the Schiff-base intermediate with substrate; via pyruvic acid. Ser182 is modified (pyruvic acid (Ser); by autocatalysis).

The protein belongs to the phosphatidylserine decarboxylase family. PSD-A subfamily. As to quaternary structure, heterodimer of a large membrane-associated beta subunit and a small pyruvoyl-containing alpha subunit. Pyruvate serves as cofactor. In terms of processing, is synthesized initially as an inactive proenzyme. Formation of the active enzyme involves a self-maturation process in which the active site pyruvoyl group is generated from an internal serine residue via an autocatalytic post-translational modification. Two non-identical subunits are generated from the proenzyme in this reaction, and the pyruvate is formed at the N-terminus of the alpha chain, which is derived from the carboxyl end of the proenzyme. The post-translation cleavage follows an unusual pathway, termed non-hydrolytic serinolysis, in which the side chain hydroxyl group of the serine supplies its oxygen atom to form the C-terminus of the beta chain, while the remainder of the serine residue undergoes an oxidative deamination to produce ammonia and the pyruvoyl prosthetic group on the alpha chain.

It localises to the cell membrane. The catalysed reaction is a 1,2-diacyl-sn-glycero-3-phospho-L-serine + H(+) = a 1,2-diacyl-sn-glycero-3-phosphoethanolamine + CO2. The protein operates within phospholipid metabolism; phosphatidylethanolamine biosynthesis; phosphatidylethanolamine from CDP-diacylglycerol: step 2/2. Its function is as follows. Catalyzes the formation of phosphatidylethanolamine (PtdEtn) from phosphatidylserine (PtdSer). In Chlorobium phaeobacteroides (strain DSM 266 / SMG 266 / 2430), this protein is Phosphatidylserine decarboxylase proenzyme.